Here is a 53-residue protein sequence, read N- to C-terminus: Large ribosomal subunit protein bL33A (53 aa).

Belongs to the bacterial ribosomal protein bL33 family.

This chain is Large ribosomal subunit protein bL33A (rpmG1), found in Mycoplasma genitalium (strain ATCC 33530 / DSM 19775 / NCTC 10195 / G37) (Mycoplasmoides genitalium).